The primary structure comprises 142 residues: Putative pre-16S rRNA nuclease (142 aa).

The protein belongs to the YqgF nuclease family.

It is found in the cytoplasm. Its function is as follows. Could be a nuclease involved in processing of the 5'-end of pre-16S rRNA. This is Putative pre-16S rRNA nuclease from Prosthecochloris aestuarii (strain DSM 271 / SK 413).